The sequence spans 83 residues: Small integral membrane protein 22 (83 aa).

A helical membrane pass occupies residues 32-52 (VAFIVFLTFMGTVLLLLLLVV). The tract at residues 60–83 (SPGPRRESPRKERPKGVDNLALEP) is disordered. The span at 63–75 (PRRESPRKERPKG) shows a compositional bias: basic and acidic residues.

In terms of assembly, interacts with CANX and DDOST. Interacts with SQLE; this interaction modulates lipid droplet formation.

The protein resides in the membrane. Its subcellular location is the late endosome. May modulate lipid droplet formation throught interaction with SQLE. The sequence is that of Small integral membrane protein 22 from Homo sapiens (Human).